Here is a 413-residue protein sequence, read N- to C-terminus: Alpha-ketoglutarate-dependent xanthine dioxygenase xan1 (413 aa).

A compositionally biased stretch (low complexity) spans 1–18; it reads MSATATTTVVEPPTTTLT. Residues 1–24 are disordered; sequence MSATATTTVVEPPTTTLTGATEPP. Fe cation contacts are provided by H183 and D185. T228 and W362 together coordinate 2-oxoglutarate. Residue H377 participates in Fe cation binding. 2-oxoglutarate is bound at residue R389.

Belongs to the TfdA dioxygenase family. Requires Fe(2+) as cofactor.

Its subcellular location is the cytoplasm. The protein localises to the cytosol. It catalyses the reaction xanthine + 2-oxoglutarate + O2 = urate + succinate + CO2. In terms of biological role, alpha-ketoglutarate-dependent xanthine dioxygenase is a non-heme mononuclear Fe(2+) enzyme that decarboxylates alpha-ketoglutarate to succinate and CO(2) while hydroxylating xanthine to generate uric acid. Allows xanthine utilization as a nitrogen source. The sequence is that of Alpha-ketoglutarate-dependent xanthine dioxygenase xan1 (xan1) from Schizosaccharomyces pombe (strain 972 / ATCC 24843) (Fission yeast).